The chain runs to 478 residues: MAAEDKFESVLSTRYCKNSPLVSILSETNKATLWRQLWIWLGEAEKELGLKQVTQEAIDEMKSQRDNFDWSFIRAEERKLKHDVMAHNHAFGKICPTAAGIIHLGATSCYVQDNADLIAYRDSIDHILKRFATVIDRLAQFSLNNKEVVTVGRTHYQTASLVTVGKRGVLWAQELLMAFQSLAEFRDKMRFRGIKGATGTQDSFLTLFSGDEEKVEALDELVTKKANFANRFLITGQTYSRQQDSQLVFSLSLLGAAAKKVCTDIRVLQAFGELLEPFEKDQIGSSAMPYKKNPMKSERCCALARKLINAPQEALTILADQGLERTLDDSAGRRMLIPDVLLTAEALLTTLQNIFEGLTVQTDNVKKIVEDEIAFLGLEKAMMMLTEEGVDRQQAHAVIRKTALEAKQLQATQKVDIRQTMADPFFDSVRDRIVGLVNNPINFTGRCVSQTENFIAKELKPTISKYLDQSAAKVQLDV.

Substrate-binding positions include 14-15, 81-83, and 107-108; these read RY, KHD, and TS. H155 (proton donor/acceptor) is an active-site residue. Residue Q237 participates in substrate binding. The active-site Proton donor/acceptor is the S285. Positions 299, 325, 330, and 334 each coordinate substrate.

This sequence belongs to the lyase 1 family. Adenylosuccinate lyase subfamily. As to quaternary structure, homotetramer. Residues from neighboring subunits contribute catalytic and substrate-binding residues to each active site.

It catalyses the reaction N(6)-(1,2-dicarboxyethyl)-AMP = fumarate + AMP. The catalysed reaction is (2S)-2-[5-amino-1-(5-phospho-beta-D-ribosyl)imidazole-4-carboxamido]succinate = 5-amino-1-(5-phospho-beta-D-ribosyl)imidazole-4-carboxamide + fumarate. The protein operates within purine metabolism; AMP biosynthesis via de novo pathway; AMP from IMP: step 2/2. Its pathway is purine metabolism; IMP biosynthesis via de novo pathway; 5-amino-1-(5-phospho-D-ribosyl)imidazole-4-carboxamide from 5-amino-1-(5-phospho-D-ribosyl)imidazole-4-carboxylate: step 2/2. Functionally, catalyzes two non-sequential steps in de novo AMP synthesis: converts (S)-2-(5-amino-1-(5-phospho-D-ribosyl)imidazole-4-carboxamido)succinate (SAICAR) to fumarate plus 5-amino-1-(5-phospho-D-ribosyl)imidazole-4-carboxamide, and thereby also contributes to de novo IMP synthesis, and converts succinyladenosine monophosphate (SAMP) to AMP and fumarate. In Caenorhabditis briggsae, this protein is Adenylosuccinate lyase.